The primary structure comprises 522 residues: MGEHFLLEMVDITKEFPGVKALDRVQLKVRKGSVHALMGENGAGKSTLMKILIGMYKPNEGKIIFDGEEVTFNSINDALDKGISMIHQELSPIPEMTVAENIFLGREPTFGKSGLVDNKKLIEMTRNLLESLEINIDPRKKMGELSIANTQMIEIAKAISFHSKLVIMDEPTSAITEKEVAQLFKMIESLKKKGVGIIYITHKMSELDEIADDISVFRDGKYIGTDTAKNLTRDDLIKMMVGRELNQIFDKPEPKLGEVILSVKSLTKQDYFEDVSFEVRKGEIVGFAGLMGSGRTEVLETIFGVKEAESGEIFVNGQKARIKSPQDAVKNNMGFLTEDRKLTGLFLPLSVRENMITVNIDKYINMGWLNGKRVKKDCEQQKQKLYIKTPSIEQIVENLSGGNQQKVLLARWLLKNPDILFLDEPTRGIDVGAKSEFYNLIFELASQGKAIVVVSSEMAEILGLCDRILVMHEGKVTGELTREEANQEKIMQYATGQAKMAKKLHVHNNFEQTVTANKIEIG.

ABC transporter domains lie at 7-244 (LEMV…VGRE) and 254-498 (PKLG…TGQA). 39 to 46 (GENGAGKS) is an ATP binding site.

It belongs to the ABC transporter superfamily. Carbohydrate importer 2 (CUT2) (TC 3.A.1.2) family.

It is found in the cell membrane. The catalysed reaction is D-ribose(out) + ATP + H2O = D-ribose(in) + ADP + phosphate + H(+). It catalyses the reaction D-galactose(out) + ATP + H2O = D-galactose(in) + ADP + phosphate + H(+). Its function is as follows. Part of an ABC transporter complex involved in carbohydrate import. Could be involved in ribose, galactose and/or methyl galactoside import. Responsible for energy coupling to the transport system. This chain is Putative ribose/galactose/methyl galactoside import ATP-binding protein, found in Halalkalibacterium halodurans (strain ATCC BAA-125 / DSM 18197 / FERM 7344 / JCM 9153 / C-125) (Bacillus halodurans).